A 121-amino-acid chain; its full sequence is uncharacterized protein (121 aa).

This is an uncharacterized protein from Microplitis demolitor (Parasitoid wasp).